Reading from the N-terminus, the 2774-residue chain is Teneurin-2 (2774 aa).

In terms of domain architecture, Teneurin N-terminal spans 1–375 (MDVKDRRHRS…KPSKYCSWKC (375 aa)). The Cytoplasmic portion of the chain corresponds to 1-379 (MDVKDRRHRS…YCSWKCAALS (379 aa)). Residues Ser-90 and Ser-124 each carry the phosphoserine modification. The segment at 111–271 (TGSDADSDTE…HHHSSANSLN (161 aa)) is disordered. Residues 141-155 (SSGLSSRENSALTLT) show a composition bias toward polar residues. Thr-155 carries the post-translational modification Phosphothreonine. Ser-157 is modified (phosphoserine). Residues 159 to 168 (NENKSDDDNG) are compositionally biased toward basic and acidic residues. The span at 174–188 (TSSSSLLPSAQLPSS) shows a compositional bias: low complexity. Positions 202–211 (DSNTSHQIMD) are enriched in polar residues. A compositionally biased stretch (low complexity) spans 229–240 (SGPQQASSSGPP). Residues 380-400 (AIAAALLLAILLAYFIAMHLL) traverse the membrane as a helical segment. Over 401–2774 (GLNWQLQPAD…FLRQNEMGKR (2374 aa)) the chain is Extracellular. N-linked (GlcNAc...) asparagine glycosylation is found at Asn-443 and Asn-482. 8 EGF-like domains span residues 575–603 (DCPR…ADCA), 605–634 (AACP…AECD), 636–668 (PMNQ…EHCE), 669–701 (EVDC…NCEL), 702–735 (ARVQ…PDCS), 738–766 (VCSV…AACD), 769–797 (VCHP…EHCT), and 808–841 (DGCP…PGCN). Intrachain disulfides connect Cys-576–Cys-586, Cys-580–Cys-591, Cys-593–Cys-602, Cys-611–Cys-622, Cys-624–Cys-633, Cys-640–Cys-651, Cys-645–Cys-656, Cys-658–Cys-667, Cys-672–Cys-683, Cys-677–Cys-688, Cys-690–Cys-699, Cys-710–Cys-723, Cys-725–Cys-734, Cys-739–Cys-749, Cys-743–Cys-754, Cys-756–Cys-765, Cys-770–Cys-780, Cys-774–Cys-785, Cys-787–Cys-796, Cys-810–Cys-820, Cys-814–Cys-829, and Cys-831–Cys-840. Residues Asn-925, Asn-948, and Asn-1267 are each glycosylated (N-linked (GlcNAc...) asparagine). NHL repeat units lie at residues 1272–1316 (LELR…VKSL), 1342–1386 (ARCG…NGII), 1401–1452 (LSCD…IAGR), 1474–1501 (LESA…INRL), and 1530–1573 (CYSG…VSKN). Residues 1583-1602 (YEAASPGEQELYVFNADGIH) form a YD 1 repeat. Residue Asn-1616 is glycosylated (N-linked (GlcNAc...) asparagine). 3 YD repeats span residues 1619–1639 (YSAD…LKIR), 1682–1701 (YDGN…WTTF), and 1702–1724 (YDYD…TSLH). Residues Asn-1712, Asn-1749, Asn-1773, Asn-1807, and Asn-1892 are each glycosylated (N-linked (GlcNAc...) asparagine). 18 YD repeats span residues 1895–1914 (YFFN…ERTD), 1936–1954 (YLDK…YIFE), 1955–1975 (YDSS…HSMS), 1982–1999 (YIRN…VIFD), 2000–2021 (YSDD…VFYK), 2022–2039 (YGKL…TAVT), 2042–2062 (YDET…FSCT), 2065–2085 (YRKV…EGMI), 2093–2113 (YHDN…TPLP), 2119–2136 (YDEI…GVIY), 2137–2163 (YDIN…IKEV), 2165–2178 (YEMF…MTVQ), 2179–2202 (YDSM…TKYT), 2205–2225 (YDGD…WRYS), 2226–2246 (YDLN…LMPL), 2248–2268 (YDLR…DDDG), 2280–2300 (YNSK…SVQY), and 2302–2322 (YDGV…LQYF). N-linked (GlcNAc...) asparagine glycosylation occurs at Asn-1993. An N-linked (GlcNAc...) asparagine glycan is attached at Asn-2197. Asn-2337 is a glycosylation site (N-linked (GlcNAc...) asparagine). A YD 23 repeat occupies 2348–2389 (YDLQGHLFAMESSSGEEYYVASDNTGTPLAVFSINGLMIKQL). Asn-2648 carries an N-linked (GlcNAc...) asparagine glycan.

Belongs to the tenascin family. Teneurin subfamily. Homodimer; disulfide-linked. Heterodimer with either TENM1 or TENM3. May also form heterodimer with TENM4. Interacts with ADGRL1 isoform 2. In terms of processing, derives from the membrane form by proteolytic processing. Post-translationally, derives from the plasma membrane form by proteolytic cleavage and translocates to the nucleus. Homophilic binding of the C-terminal extracellular domain stimulates its proteolytic cleavage and release in the cytoplasmic. Is subjected to rapid degradation by the proteasome pathway. Expressed in the brain (at protein level).

It localises to the cell membrane. It is found in the presynaptic cell membrane. The protein localises to the postsynaptic cell membrane. The protein resides in the endoplasmic reticulum. Its subcellular location is the golgi apparatus. It localises to the synapse. It is found in the cell projection. The protein localises to the dendritic spine. The protein resides in the filopodium. Its subcellular location is the growth cone. It localises to the nucleus. It is found in the PML body. Its function is as follows. Involved in neural development, regulating the establishment of proper connectivity within the nervous system. Acts as a ligand of the ADGRL1 and ADGRL3 receptors that are expressed at the surface of adjacent cells. Promotes the formation of filopodia and enlarged growth cone in neuronal cells. Mediates axon guidance and homophilic and heterophilic cell-cell adhesion. May function as a cellular signal transducer. Induces gene transcription inhibition. The sequence is that of Teneurin-2 (Tenm2) from Rattus norvegicus (Rat).